The sequence spans 542 residues: Probable spastin homolog spas-1 (542 aa).

Residues 29-66 (RAAIEMDELTKQNGTINEKLQTAELYKQARQMLKEANE) adopt a coiled-coil conformation. Positions 131 to 177 (ATVPGDKKVSKVKQTEKAPHVCSRGDRCGAHQPPPEKKSTPLKPVNQ) are disordered. The segment covering 135 to 169 (GDKKVSKVKQTEKAPHVCSRGDRCGAHQPPPEKKS) has biased composition (basic and acidic residues). Residue 309 to 316 (GPPGNGKT) coordinates ATP.

The protein belongs to the AAA ATPase family. Spastin subfamily. Homohexamer. The homohexamer is stabilized by ATP-binding. The homohexamer may adopt a ring conformation through which microtubules pass prior to being severed. Interacts with microtubules.

The protein resides in the cytoplasm. Its subcellular location is the cytoskeleton. The protein localises to the perinuclear region. The enzyme catalyses n ATP + n H2O + a microtubule = n ADP + n phosphate + (n+1) alpha/beta tubulin heterodimers.. In terms of biological role, severs microtubules, probably in an ATP-dependent fashion. The sequence is that of Probable spastin homolog spas-1 (spas-1) from Caenorhabditis briggsae.